The primary structure comprises 145 residues: Deoxyuridine 5'-triphosphate nucleotidohydrolase (145 aa).

Substrate-binding positions include 63-65 (RSG), glutamine 76, and 80-82 (TVD).

The protein belongs to the dUTPase family. It depends on Mg(2+) as a cofactor.

It carries out the reaction dUTP + H2O = dUMP + diphosphate + H(+). The protein operates within pyrimidine metabolism; dUMP biosynthesis; dUMP from dCTP (dUTP route): step 2/2. Functionally, this enzyme is involved in nucleotide metabolism: it produces dUMP, the immediate precursor of thymidine nucleotides and it decreases the intracellular concentration of dUTP so that uracil cannot be incorporated into DNA. The protein is Deoxyuridine 5'-triphosphate nucleotidohydrolase of Chlamydia muridarum (strain MoPn / Nigg).